The primary structure comprises 439 residues: Mitochondrial distribution and morphology protein 12 (439 aa).

Residues 1–439 (MSIDINWDTI…VYPSFWTFLV (439 aa)) form the SMP-LTD domain. Disordered regions lie at residues 65–165 (PLPD…PGAL) and 229–284 (LTLT…HEKS). The span at 69–90 (FYEDDEDYPDEEGDEAENEAED) shows a compositional bias: acidic residues. Positions 109-121 (PSRDSQSRERGRG) are enriched in basic and acidic residues. Over residues 229 to 243 (LTLTPQSHPDPTSRP) the composition is skewed to polar residues.

The protein belongs to the MDM12 family. Component of the ER-mitochondria encounter structure (ERMES) or MDM complex, composed of MMM1, MDM10, mdm12 and MDM34. An MMM1 homodimer associates with one molecule of mdm12 on each side in a pairwise head-to-tail manner, and the SMP-LTD domains of MMM1 and mdm12 generate a continuous hydrophobic tunnel for phospholipid trafficking.

The protein resides in the mitochondrion outer membrane. Its subcellular location is the endoplasmic reticulum membrane. In terms of biological role, component of the ERMES/MDM complex, which serves as a molecular tether to connect the endoplasmic reticulum (ER) and mitochondria. Components of this complex are involved in the control of mitochondrial shape and protein biogenesis, and function in nonvesicular lipid trafficking between the ER and mitochondria. mdm12 is required for the interaction of the ER-resident membrane protein MMM1 and the outer mitochondrial membrane-resident beta-barrel protein MDM10. The mdm12-MMM1 subcomplex functions in the major beta-barrel assembly pathway that is responsible for biogenesis of all mitochondrial outer membrane beta-barrel proteins, and acts in a late step after the SAM complex. The MDM10-mdm12-MMM1 subcomplex further acts in the TOM40-specific pathway after the action of the mdm12-MMM1 complex. Essential for establishing and maintaining the structure of mitochondria and maintenance of mtDNA nucleoids. This chain is Mitochondrial distribution and morphology protein 12, found in Pyrenophora tritici-repentis (strain Pt-1C-BFP) (Wheat tan spot fungus).